The following is a 431-amino-acid chain: Tyrosine--tRNA ligase (431 aa).

Tyr-34 serves as a coordination point for L-tyrosine. The short motif at 39 to 48 (PTADSLHIGH) is the 'HIGH' region element. The L-tyrosine site is built by Tyr-171 and Gln-175. The short motif at 231–235 (KFGKT) is the 'KMSKS' region element. Residue Lys-234 coordinates ATP. The S4 RNA-binding domain maps to 353–422 (INVVEALVKT…GKYTILRRGK (70 aa)).

Belongs to the class-I aminoacyl-tRNA synthetase family. TyrS type 1 subfamily. Homodimer.

Its subcellular location is the cytoplasm. It carries out the reaction tRNA(Tyr) + L-tyrosine + ATP = L-tyrosyl-tRNA(Tyr) + AMP + diphosphate + H(+). In terms of biological role, catalyzes the attachment of tyrosine to tRNA(Tyr) in a two-step reaction: tyrosine is first activated by ATP to form Tyr-AMP and then transferred to the acceptor end of tRNA(Tyr). The sequence is that of Tyrosine--tRNA ligase from Neisseria meningitidis serogroup C / serotype 2a (strain ATCC 700532 / DSM 15464 / FAM18).